The sequence spans 66 residues: Large ribosomal subunit protein bL35 (66 aa).

The protein belongs to the bacterial ribosomal protein bL35 family.

This Ruegeria sp. (strain TM1040) (Silicibacter sp.) protein is Large ribosomal subunit protein bL35.